We begin with the raw amino-acid sequence, 64 residues long: FVCVQARQIDPEQILRTPEKRASCSSRGGICRSTSIGCPRRYHSCHLFHHCRSHGDSCCCPNYG.

Residues 1-17 (FVCVQARQIDPEQILRT) form the signal peptide. A propeptide spanning residues 18-19 (PE) is cleaved from the precursor.

In terms of processing, contains 4 disulfide bonds.

The protein localises to the secreted. It is found in the nematocyst. This is Small cysteine-rich protein from Anemonia viridis (Snakelocks anemone).